Reading from the N-terminus, the 311-residue chain is Methionyl-tRNA formyltransferase (311 aa).

110 to 113 (SLLP) contacts (6S)-5,6,7,8-tetrahydrofolate.

It belongs to the Fmt family.

The catalysed reaction is L-methionyl-tRNA(fMet) + (6R)-10-formyltetrahydrofolate = N-formyl-L-methionyl-tRNA(fMet) + (6S)-5,6,7,8-tetrahydrofolate + H(+). In terms of biological role, attaches a formyl group to the free amino group of methionyl-tRNA(fMet). The formyl group appears to play a dual role in the initiator identity of N-formylmethionyl-tRNA by promoting its recognition by IF2 and preventing the misappropriation of this tRNA by the elongation apparatus. This is Methionyl-tRNA formyltransferase from Streptococcus pneumoniae serotype 2 (strain D39 / NCTC 7466).